The chain runs to 466 residues: MKTGSLTQRGALLLLLLLAPAVTPTWYAGSGYSPDESYNEVYAEEVPDTRALDYRVPRWCYTLNIQDGEATCYSPRGGNYHSSLGTRCELSCDRGFRLIGRKSVQCLPSRRWSGTAYCRQMRCHTLPFITSGTYTCTNGMLLDSRCDYSCSSGYHLEGDRSRICMEDGRWSGGEPVCVDIDPPKIRCPHSREKIAEPEKLTARVYWDPPLVKDSADGTITRVTLRGPEPGSHFPEGEHVIRYTAYDRAYNRASCKFIVKVQVRRCPILKPPQHGYLTCSSAGDNYGAICEYHCDGGYERQGTPSRVCQSSRQWSGSPPVCTPMKINVNVNSAAGLLDQFYEKQRLLIVSAPDPSNRYYKMQISMLQQSTCGLDLRHVTIIELVGQPPQEVGRIREQQLSAGIIEELRQFQRLTRSYFNMVLIDKQGIDRERYMEPVTPEEIFTFIDDYLLSNQELARRAEQRDVCE.

The signal sequence occupies residues 1-24 (MKTGSLTQRGALLLLLLLAPAVTP). Sushi domains lie at 70–120 (ATCY…YCRQ), 121–179 (MRCH…VCVD), and 263–322 (RRCP…VCTP). 4 cysteine pairs are disulfide-bonded: Cys72/Cys106, Cys92/Cys118, Cys123/Cys164, and Cys150/Cys177. The region spanning 178-262 (VDIDPPKIRC…SCKFIVKVQV (85 aa)) is the HYR domain. Disulfide bonds link Cys265-Cys307 and Cys293-Cys320.

Forms homooligomers. Interacts with PLAUR (via the UPAR/Ly6 domains), ADAMTS4 and CTSB. Interacts with HGF; the interaction increases the mitogenic activity of HGF. In terms of processing, contains chondroitin sulfate chains.

The protein resides in the secreted. The protein localises to the cytoplasm. Its subcellular location is the cell surface. It localises to the synapse. Functionally, acts as a ligand for the urokinase plasminogen activator surface receptor. Plays a role in angiogenesis by inducing endothelial cell migration and the formation of vascular network (cords). Involved in cellular migration and adhesion. Increases the phosphorylation levels of FAK. Interacts with and increases the mitogenic activity of HGF. Promotes synapse formation. The polypeptide is Sushi repeat-containing protein SRPX2 (Rattus norvegicus (Rat)).